The chain runs to 405 residues: 4-hydroxy-3-methylbut-2-en-1-yl diphosphate synthase (ferredoxin) (405 aa).

The [4Fe-4S] cluster site is built by cysteine 314, cysteine 317, cysteine 348, and glutamate 355.

Belongs to the IspG family. Requires [4Fe-4S] cluster as cofactor.

It catalyses the reaction (2E)-4-hydroxy-3-methylbut-2-enyl diphosphate + 2 oxidized [2Fe-2S]-[ferredoxin] + H2O = 2-C-methyl-D-erythritol 2,4-cyclic diphosphate + 2 reduced [2Fe-2S]-[ferredoxin] + H(+). Its pathway is isoprenoid biosynthesis; isopentenyl diphosphate biosynthesis via DXP pathway; isopentenyl diphosphate from 1-deoxy-D-xylulose 5-phosphate: step 5/6. Converts 2C-methyl-D-erythritol 2,4-cyclodiphosphate (ME-2,4cPP) into 1-hydroxy-2-methyl-2-(E)-butenyl 4-diphosphate. This chain is 4-hydroxy-3-methylbut-2-en-1-yl diphosphate synthase (ferredoxin), found in Prochlorococcus marinus subsp. pastoris (strain CCMP1986 / NIES-2087 / MED4).